The chain runs to 434 residues: Trigger factor (434 aa).

One can recognise a PPIase FKBP-type domain in the interval 162 to 247 (GDKINISLIA…FNTVEQAKLP (86 aa)).

The protein belongs to the FKBP-type PPIase family. Tig subfamily.

The protein localises to the cytoplasm. It carries out the reaction [protein]-peptidylproline (omega=180) = [protein]-peptidylproline (omega=0). Functionally, involved in protein export. Acts as a chaperone by maintaining the newly synthesized protein in an open conformation. Functions as a peptidyl-prolyl cis-trans isomerase. In Methylobacillus flagellatus (strain ATCC 51484 / DSM 6875 / VKM B-1610 / KT), this protein is Trigger factor.